We begin with the raw amino-acid sequence, 209 residues long: Small ribosomal subunit protein uS3 (209 aa).

A KH type-2 domain is found at 38–107 (IRNFIKKNYN…KFGIDIIELK (70 aa)).

This sequence belongs to the universal ribosomal protein uS3 family. Part of the 30S ribosomal subunit. Forms a tight complex with proteins S10 and S14.

Binds the lower part of the 30S subunit head. Binds mRNA in the 70S ribosome, positioning it for translation. This chain is Small ribosomal subunit protein uS3, found in Fervidobacterium nodosum (strain ATCC 35602 / DSM 5306 / Rt17-B1).